Consider the following 220-residue polypeptide: Ras-related protein Rab-3A (220 aa).

Serine 31, serine 32, valine 33, glycine 34, lysine 35, threonine 36, serine 37, threonine 48, proline 49, serine 53, and threonine 54 together coordinate GTP. Position 36 (threonine 36) interacts with Mg(2+). Residues 49-58 (PAFVSTVGID) carry the Switch 1 motif. Mg(2+) contacts are provided by threonine 54 and aspartate 77. Glycine 80 serves as a coordination point for GTP. The short motif at 80-96 (GQERYRTITTAYYRGAM) is the Switch 2 element. Phosphothreonine is present on threonine 86. GTP contacts are provided by asparagine 135, lysine 136, aspartate 138, alanine 166, and lysine 167. Phosphoserine occurs at positions 188 and 190. Positions 194–220 (ADPAVTGAKQGPQLTDQQAPPHQDCAC) are disordered. Residues cysteine 218 and cysteine 220 are each lipidated (S-geranylgeranyl cysteine). Cysteine 220 is modified (cysteine methyl ester).

The protein belongs to the small GTPase superfamily. Rab family. Interacts with RIMS1 and RIMS2. Interacts with Rabphilin-3A/RPH3A and Rab effector Noc2/RPH3AL. Interacts with SYTL4. Interacts with RAB3IP. Interacts with SGSM1 and SGSM3. Interacts with SYT1. Interacts with MYH9; this interaction is essential for lysosome exocytosis and plasma membrane repair. Interacts with STXBP1; this interaction promotes RAB3A dissociation from the vesicle membrane. Interacts with SNCA. Interacts with GDI1, GDI2, CHM and CHML; phosphorylation at Thr-86 disrupts these interactions. Interacts with MADD (via uDENN domain); the GTP-bound form is preferred for interaction. Mg(2+) serves as cofactor. Post-translationally, phosphorylation of Thr-86 in the switch II region by LRRK2 prevents the association of RAB regulatory proteins, including CHM, CHML and RAB GDP dissociation inhibitors GDI1 and GDI2.

The protein localises to the cytoplasm. It is found in the cytosol. It localises to the lysosome. The protein resides in the cytoplasmic vesicle. Its subcellular location is the secretory vesicle. The protein localises to the cell projection. It is found in the axon. It localises to the cell membrane. The protein resides in the presynapse. Its subcellular location is the postsynapse. It carries out the reaction GTP + H2O = GDP + phosphate + H(+). Its activity is regulated as follows. Regulated by guanine nucleotide exchange factors (GEFs) including RAB3IL1 and MADD which promote the exchange of bound GDP for free GTP. Regulated by GTPase activating proteins (GAPs) including RAB3GAP1 and TBC1D10B which increase the GTP hydrolysis activity. Inhibited by GDP dissociation inhibitors (GDIs) which prevent Rab-GDP dissociation. Functionally, the small GTPases Rab are key regulators of intracellular membrane trafficking, from the formation of transport vesicles to their fusion with membranes. Rabs cycle between an inactive GDP-bound form and an active GTP-bound form that is able to recruit to membranes different sets of downstream effectors directly responsible for vesicle formation, movement, tethering and fusion. RAB3A plays a central role in regulated exocytosis and secretion. Controls the recruitment, tethering and docking of secretory vesicles to the plasma membrane. Upon stimulation, switches to its active GTP-bound form, cycles to vesicles and recruits effectors such as RIMS1, RIMS2, Rabphilin-3A/RPH3A, RPH3AL or SYTL4 to help the docking of vesicules onto the plasma membrane. Upon GTP hydrolysis by GTPase-activating protein, dissociates from the vesicle membrane allowing the exocytosis to proceed. Stimulates insulin secretion through interaction with RIMS2 or RPH3AL effectors in pancreatic beta cells. Regulates calcium-dependent lysosome exocytosis and plasma membrane repair (PMR) via the interaction with 2 effectors, SYTL4 and myosin-9/MYH9. Acts as a positive regulator of acrosome content secretion in sperm cells by interacting with RIMS1. Also plays a role in the regulation of dopamine release by interacting with synaptotagmin I/SYT. The protein is Ras-related protein Rab-3A (RAB3A) of Sus scrofa (Pig).